Here is a 298-residue protein sequence, read N- to C-terminus: GTPase Era (298 aa).

One can recognise an Era-type G domain in the interval 3 to 170 (KSGFVAILGR…VQLLKDNLEE (168 aa)). The interval 11 to 18 (GRPNVGKS) is G1. Residue 11–18 (GRPNVGKS) participates in GTP binding. A G2 region spans residues 37–41 (QTTRN). The tract at residues 58–61 (DTPG) is G3. GTP is bound by residues 58–62 (DTPGI) and 120–123 (NKID). Residues 120 to 123 (NKID) are G4. The interval 149-151 (ISA) is G5. The KH type-2 domain occupies 201–279 (TQQEVPHSVA…YLETWVKVKK (79 aa)).

The protein belongs to the TRAFAC class TrmE-Era-EngA-EngB-Septin-like GTPase superfamily. Era GTPase family. In terms of assembly, monomer.

Its subcellular location is the cytoplasm. The protein resides in the cell membrane. Its function is as follows. An essential GTPase that binds both GDP and GTP, with rapid nucleotide exchange. Plays a role in 16S rRNA processing and 30S ribosomal subunit biogenesis and possibly also in cell cycle regulation and energy metabolism. This chain is GTPase Era, found in Streptococcus equi subsp. zooepidemicus (strain MGCS10565).